We begin with the raw amino-acid sequence, 317 residues long: Aspartate carbamoyltransferase catalytic subunit (317 aa).

2 residues coordinate carbamoyl phosphate: Arg-66 and Thr-67. Lys-94 contacts L-aspartate. Arg-116, His-144, and Gln-147 together coordinate carbamoyl phosphate. Positions 177 and 231 each coordinate L-aspartate. Carbamoyl phosphate-binding residues include Gly-272 and Pro-273.

Belongs to the aspartate/ornithine carbamoyltransferase superfamily. ATCase family. Heterododecamer (2C3:3R2) of six catalytic PyrB chains organized as two trimers (C3), and six regulatory PyrI chains organized as three dimers (R2).

The catalysed reaction is carbamoyl phosphate + L-aspartate = N-carbamoyl-L-aspartate + phosphate + H(+). It functions in the pathway pyrimidine metabolism; UMP biosynthesis via de novo pathway; (S)-dihydroorotate from bicarbonate: step 2/3. In terms of biological role, catalyzes the condensation of carbamoyl phosphate and aspartate to form carbamoyl aspartate and inorganic phosphate, the committed step in the de novo pyrimidine nucleotide biosynthesis pathway. This chain is Aspartate carbamoyltransferase catalytic subunit, found in Rhodopseudomonas palustris (strain BisB5).